We begin with the raw amino-acid sequence, 517 residues long: Crotonobetaine/carnitine--CoA ligase (517 aa).

This sequence belongs to the ATP-dependent AMP-binding enzyme family.

It carries out the reaction 4-(trimethylamino)butanoate + ATP + CoA = 4-(trimethylamino)butanoyl-CoA + AMP + diphosphate. The enzyme catalyses crotonobetaine + ATP + CoA = crotonobetainyl-CoA + AMP + diphosphate. The catalysed reaction is (R)-carnitine + ATP + CoA = (R)-carnitinyl-CoA + AMP + diphosphate. The protein operates within amine and polyamine metabolism; carnitine metabolism. Its function is as follows. Catalyzes the transfer of CoA to carnitine, generating the initial carnitinyl-CoA needed for the CaiB reaction cycle. Also has activity toward crotonobetaine and gamma-butyrobetaine. This chain is Crotonobetaine/carnitine--CoA ligase, found in Salmonella agona (strain SL483).